The chain runs to 500 residues: NF-kappa-B inhibitor cactus (500 aa).

Low complexity predominate over residues 1–43; it reads MPSPTKAAEAATKATATSDCSCSAASVEQRAPSNAANPSSSLA. Disordered regions lie at residues 1 to 148 and 171 to 212; these read MPSP…MRLK and LNNL…APPS. Ser-45 bears the Phosphoserine; by PKC mark. Positions 69-86 are enriched in polar residues; sequence NETSDSGFISGPQSSQIF. A compositionally biased stretch (acidic residues) spans 118-130; it reads IIDEEEDQEEQEK. Phosphoserine; by PKC is present on Ser-144. Residues 171-189 are compositionally biased toward polar residues; the sequence is LNNLGQSSSTQITGRSKVQ. Position 183 is a phosphothreonine; by PKC (Thr-183). Positions 190–212 are enriched in low complexity; sequence SSTASTANANPSGSGATSSAPPS. ANK repeat units lie at residues 229–261, 265–294, 298–327, 361–390, and 395–424; these read DGDTPLHLACISGSVDVVAALIRMAPHPCLLNI, VAQTPLHLAALTAQPNIMRILLLAGAEPTV, HGNTALHLSCIAGEKQCVRALTEKFGATEI, DGERCVHLAAEAGHIDILRILVSHGADINA, and SGRTPLHIAIEGCNEDLANFLLDECEKLNL. Phosphothreonine; by PKC is present on residues Thr-293 and Thr-319. The residue at position 395 (Ser-395) is a Phosphoserine; by PKC.

The protein belongs to the NF-kappa-B inhibitor family. In terms of assembly, phosphorylated isoform A binds to dorsal (dl); inhibits dl translocation to the nucleus and therefore from binding to DNA. In vitro, interacts with IKKbeta. Interacts with cactin and kappa-B-Ras. Activated IKKbeta phosphorylates cact. In terms of tissue distribution, expressed in ovary (at protein level).

It localises to the cytoplasm. Involved in the formation of the dorsoventral pattern. It inhibits nuclear translocation of the dorsal morphogen in the dorsal region of the embryo. Acts as a negative regulator of the NF-kappa-B (rel) signaling pathway. Cact is degraded by IKKbeta, this is essential for NF-kappa-B (rel) activation. The protein is NF-kappa-B inhibitor cactus (cact) of Drosophila melanogaster (Fruit fly).